A 567-amino-acid polypeptide reads, in one-letter code: D-lactate dehydrogenase [cytochrome], mitochondrial (567 aa).

A mitochondrion-targeting transit peptide spans 1–56; it reads MAFASKFARSKTILSFLRPCRQLHSTPKSTGDVTVLSPVKGRRRLPTCWSSSLFPL. The FAD-binding PCMH-type domain occupies 142 to 319; that stretch reads AVNIPDVVVF…TEITLRLQKI (178 aa).

Belongs to the FAD-binding oxidoreductase/transferase type 4 family. As to quaternary structure, homodimer. Requires FAD as cofactor. As to expression, expressed in leaves, stems, flowers and roots.

The protein localises to the mitochondrion. It carries out the reaction (R)-lactate + 2 Fe(III)-[cytochrome c] = 2 Fe(II)-[cytochrome c] + pyruvate + 2 H(+). Inhibited by cyanide ions. Functionally, catalyzes the stereospecific oxidation of D-lactate to pyruvate. Involved in the detoxification of methylglyoxal and D-lactate, but probably not involved in the metabolization of glycolate. This chain is D-lactate dehydrogenase [cytochrome], mitochondrial, found in Arabidopsis thaliana (Mouse-ear cress).